The primary structure comprises 302 residues: MDGGYDQSGGASRYFHNLFRPELHHQLQPQPQLHPLPQPQPQPQPQQQNSDDESDSNKDPGSDPVTSGSTGKRPRGRPPGSKNKPKPPVIVTRDSPNVLRSHVLEVSSGADIVESVTTYARRRGRGVSILSGNGTVANVSLRQPATTAAHGANGGTGGVVALHGRFEILSLTGTVLPPPAPPGSGGLSIFLSGVQGQVIGGNVVAPLVASGPVILMAASFSNATFERLPLEDEGGEGGEGGEVGEGGGGEGGPPPATSSSPPSGAGQGQLRGNMSGYDQFAGDPHLLGWGAAAAAAPPRPAF.

The disordered stretch occupies residues 1–95; sequence MDGGYDQSGG…KPPVIVTRDS (95 aa). The segment covering 32–44 has biased composition (pro residues); the sequence is QLHPLPQPQPQPQ. The segment at residues 72 to 84 is a DNA-binding region (a.T hook); the sequence is KRPRGRPPGSKNK. The 146-residue stretch at 96–241 folds into the PPC domain; sequence PNVLRSHVLE…DEGGEGGEGG (146 aa). The segment at 164–169 is required for the binding to non-AHL interactors; the sequence is GRFEIL. The tract at residues 229–279 is disordered; that stretch reads PLEDEGGEGGEGGEVGEGGGGEGGPPPATSSSPPSGAGQGQLRGNMSGYDQ. Gly residues predominate over residues 237 to 251; that stretch reads GGEGGEVGEGGGGEG.

Homodimer. Interacts with AHL5, AHL12, AHL25, AHL27, TCP4, TCP13 and EF114. In terms of tissue distribution, expressed in the hypocotyl and the vascular tissue of seedling.

The protein resides in the nucleus. Transcription factor that specifically binds AT-rich DNA sequences related to the nuclear matrix attachment regions (MARs). Acts redundantly with AHL18, AHL22 and AHL27 in the regulation of flowering and regulation of the hypocotyl elongation. Acts redundantly with AHL27/ESC to modulate hypocotyl growth inhibition in response to light. The sequence is that of AT-hook motif nuclear-localized protein 29 from Arabidopsis thaliana (Mouse-ear cress).